The sequence spans 182 residues: Adenine phosphoribosyltransferase (182 aa).

It belongs to the purine/pyrimidine phosphoribosyltransferase family. As to quaternary structure, homodimer.

It localises to the cytoplasm. The enzyme catalyses AMP + diphosphate = 5-phospho-alpha-D-ribose 1-diphosphate + adenine. It functions in the pathway purine metabolism; AMP biosynthesis via salvage pathway; AMP from adenine: step 1/1. Functionally, catalyzes a salvage reaction resulting in the formation of AMP, that is energically less costly than de novo synthesis. The sequence is that of Adenine phosphoribosyltransferase from Streptomyces galbus.